Consider the following 303-residue polypeptide: Protoheme IX farnesyltransferase (303 aa).

A run of 6 helical transmembrane segments spans residues 25-45, 54-74, 118-138, 166-186, 230-250, and 280-300; these read MGLV…AIVM, IPQI…ACAL, CLFL…VGYV, IGWV…FLVV, LVLL…FVVI, and FVYS…VSLI.

The protein belongs to the UbiA prenyltransferase family. Protoheme IX farnesyltransferase subfamily. In terms of assembly, interacts with CtaA.

It localises to the cell membrane. The enzyme catalyses heme b + (2E,6E)-farnesyl diphosphate + H2O = Fe(II)-heme o + diphosphate. Its pathway is porphyrin-containing compound metabolism; heme O biosynthesis; heme O from protoheme: step 1/1. Converts heme B (protoheme IX) to heme O by substitution of the vinyl group on carbon 2 of heme B porphyrin ring with a hydroxyethyl farnesyl side group. In Staphylococcus epidermidis (strain ATCC 12228 / FDA PCI 1200), this protein is Protoheme IX farnesyltransferase.